The primary structure comprises 299 residues: SET domain-containing protein 9 (299 aa).

Residues F122–Y295 form the SET domain. Y294 serves as a coordination point for S-adenosyl-L-methionine.

It belongs to the class V-like SAM-binding methyltransferase superfamily.

This is SET domain-containing protein 9 (SETD9) from Homo sapiens (Human).